Consider the following 171-residue polypeptide: Deoxyuridine 5'-triphosphate nucleotidohydrolase (171 aa).

Glu-143 serves as a coordination point for Mg(2+).

This sequence belongs to the dUTPase family. As to quaternary structure, homotrimer. It depends on Mg(2+) as a cofactor.

It carries out the reaction dUTP + H2O = dUMP + diphosphate + H(+). The protein operates within pyrimidine metabolism; dUMP biosynthesis; dUMP from dCTP (dUTP route): step 2/2. This enzyme is involved in nucleotide metabolism: it produces dUMP, the immediate precursor of thymidine nucleotides and it decreases the intracellular concentration of dUTP, preventing uracil incorporation into DNA. The sequence is that of Deoxyuridine 5'-triphosphate nucleotidohydrolase (DUT) from Oryza sativa subsp. japonica (Rice).